We begin with the raw amino-acid sequence, 431 residues long: Tol-Pal system protein TolB (431 aa).

An N-terminal signal peptide occupies residues M1–S19.

This sequence belongs to the TolB family. In terms of assembly, the Tol-Pal system is composed of five core proteins: the inner membrane proteins TolA, TolQ and TolR, the periplasmic protein TolB and the outer membrane protein Pal. They form a network linking the inner and outer membranes and the peptidoglycan layer.

It localises to the periplasm. Functionally, part of the Tol-Pal system, which plays a role in outer membrane invagination during cell division and is important for maintaining outer membrane integrity. TolB occupies a key intermediary position in the Tol-Pal system because it communicates directly with both membrane-embedded components, Pal in the outer membrane and TolA in the inner membrane. The polypeptide is Tol-Pal system protein TolB (Wigglesworthia glossinidia brevipalpis).